The chain runs to 514 residues: Alpha-1B adrenergic receptor (514 aa).

Residues 1 to 45 lie on the Extracellular side of the membrane; the sequence is MNPDLDTGHNTSAPAHWGELKDANFTGPNQTSSNSTLPQLDVTRA. N10, N24, N29, and N34 each carry an N-linked (GlcNAc...) asparagine glycan. A helical transmembrane segment spans residues 46–69; sequence ISVGCLGAFILFAIVGNILVILSV. At 70-82 the chain is on the cytoplasmic side; sequence ACNRHLRTPTNYF. Residues 83-104 form a helical membrane-spanning segment; it reads IVNLAIADLLLSFTDLPFSATL. Residues 105–114 are Extracellular-facing; it reads EVLGYWVLGR. A helical transmembrane segment spans residues 115–140; it reads IFCDIWAAVDVLCCTASILSLCAISI. The cysteines at positions 117 and 194 are disulfide-linked. Over 141–160 the chain is Cytoplasmic; that stretch reads DRYIGVRYSLQYPTLVTRRK. The chain crosses the membrane as a helical span at residues 161-183; it reads AILALLSVWVLSTVISIGPLLGW. Over 184–200 the chain is Extracellular; sequence KEPAPNDDKECGVTEEP. A helical transmembrane segment spans residues 201–223; that stretch reads FYALFSSLGSFYIPLAVILVMYC. Over 224 to 294 the chain is Cytoplasmic; that stretch reads RVYIVAKRTT…FSREKKAAKT (71 aa). T263 is subject to Phosphothreonine. A helical transmembrane segment spans residues 295–318; that stretch reads LGIVVGMFILCWLPFFIALPLGSL. Residues 319–325 are Extracellular-facing; the sequence is FSTLKPP. A helical transmembrane segment spans residues 326–350; sequence DAVFKVVFWLGYFNSCLNPIIYPCS. At 351-514 the chain is on the cytoplasmic side; it reads SKEFKRAFMR…SNMPLAPGHF (164 aa). Residue C364 is the site of S-palmitoyl cysteine attachment. Residues 367-377 carry the Nuclear localization signal motif; sequence RGGRRRRRRRR. Disordered regions lie at residues 391 to 429 and 473 to 514; these read GGSL…GYLG and LGEP…PGHF. Residues 409–423 are compositionally biased toward polar residues; sequence SCMSGSQRTLPSASP.

Belongs to the G-protein coupled receptor 1 family. Adrenergic receptor subfamily. ADRA1B sub-subfamily. Homo- and heterooligomer. Heterooligomerizes with ADRA1B homooligomers in cardiac myocytes. Interacts with CAVIN4.

Its subcellular location is the nucleus membrane. It is found in the cell membrane. The protein localises to the cytoplasm. It localises to the membrane. The protein resides in the caveola. Its function is as follows. This alpha-adrenergic receptor mediates its action by association with G proteins that activate a phosphatidylinositol-calcium second messenger system. Its effect is mediated by G(q) and G(11) proteins. Nuclear ADRA1A-ADRA1B heterooligomers regulate phenylephrine (PE)-stimulated ERK signaling in cardiac myocytes. The polypeptide is Alpha-1B adrenergic receptor (Adra1b) (Mus musculus (Mouse)).